The chain runs to 237 residues: RING-H2 finger protein ATL57 (237 aa).

A helical membrane pass occupies residues 51-71 (ALTIFILLVALFFMGFFSVYF). The RING-type; atypical zinc-finger motif lies at 140-182 (CVICLSDFEEGETVKVIPHCGHVFHVDCVDTWLSSYVTCPLCR).

This sequence belongs to the RING-type zinc finger family. ATL subfamily.

Its subcellular location is the membrane. It carries out the reaction S-ubiquitinyl-[E2 ubiquitin-conjugating enzyme]-L-cysteine + [acceptor protein]-L-lysine = [E2 ubiquitin-conjugating enzyme]-L-cysteine + N(6)-ubiquitinyl-[acceptor protein]-L-lysine.. It functions in the pathway protein modification; protein ubiquitination. This chain is RING-H2 finger protein ATL57 (ATL57), found in Arabidopsis thaliana (Mouse-ear cress).